Reading from the N-terminus, the 77-residue chain is VpAmp2.0 (77 aa).

Residues 1–23 form the signal peptide; it reads MQLRKALLVIFVAYLLVTDEAEA. The propeptide occupies 49–77; that stretch reads RKREIEDLFDPYQKDLDLQRLDRFFSQFQ.

It belongs to the non-disulfide-bridged peptide (NDBP) superfamily. Medium-length antimicrobial peptide (group 3) family. Expressed by the venom gland.

Its subcellular location is the secreted. The protein resides in the target cell membrane. Functionally, antimicrobial peptide with potent activity against Gram-positive bacteria S.aureus (MIC=10 uM) and S.agalactiaea (MIC=15 uM), and Gram-negative bacteria E.coli (MIC=24 uM) and P.aeruginosa (MIC=15 uM), as well as against yeasts Candida albicans (MIC=3.1 uM) and C.glabrata (MIC=25 uM). Also elicits low hemolysis on human erythrocytes (HC(50)=167 uM). The chain is VpAmp2.0 from Mesomexovis punctatus (Scorpion).